Consider the following 1493-residue polypeptide: ABC transporter C family member 7 (1493 aa).

The next 10 membrane-spanning stretches (helical) occupy residues 21-41 (FPMFSIFFNLLLLLVMFGSCV), 70-90 (VVICCETLSALNSVLLLLSCF), 102-122 (LMILLDLLFTALSWGAISFYI), 140-160 (VWWVLYFMFSCYRLLVDIALY), 165-185 (LVSVHLLLSDVLAVSVGLFLC), 309-329 (ILLSTLFAFVYTVSCYVAPYL), 343-360 (YSNQGVVLVTTFFVAKLV), 423-443 (WYMHDPWILVLQISLALLILY), 448-468 (LGSIAAFAATFLVMLGNIPLA), and 535-555 (SVLWAAPSFVSATAFGACMLL). The ABC transmembrane type-1 1 domain maps to 309–590 (ILLSTLFAFV…LPDTISMIVQ (282 aa)). The 224-residue stretch at 624-847 (VEVSNGAFSW…GTDFMELVGA (224 aa)) folds into the ABC transporter 1 domain. An ATP-binding site is contributed by 659 to 666 (GTVGSGKS). Residues 863–898 (ASAQSTTSKESKVSNDEEKQEEDLPSPKGQLVQEEE) form a disordered region. A Phosphoserine modification is found at Ser-888. A run of 6 helical transmembrane segments spans residues 915 to 935 (LAYGGALVPIILVVQILFQVL), 959 to 979 (GSTLILVYVFLATASSFCILV), 1038 to 1055 (FSNLAIAAVNILGIIGVM), 1059 to 1081 (AWQVLIVFIPVIAACTWYRQYYI), 1153 to 1173 (LSTVAFALSLVILVSVPEGVI), and 1177 to 1197 (FAGLAVTYALNLNSLQATLIW). An ABC transmembrane type-1 2 domain is found at 922 to 1204 (VPIILVVQIL…LIWTLCDLEN (283 aa)). One can recognise an ABC transporter 2 domain in the interval 1241–1475 (ITICNLQVRY…KSSSFSKLVA (235 aa)). 1275 to 1282 (GRTGCGKS) lines the ATP pocket.

Belongs to the ABC transporter superfamily. ABCC family. Conjugate transporter (TC 3.A.1.208) subfamily. As to expression, ubiquitous.

Its subcellular location is the membrane. It carries out the reaction ATP + H2O + xenobioticSide 1 = ADP + phosphate + xenobioticSide 2.. Functionally, pump for glutathione S-conjugates. This chain is ABC transporter C family member 7 (ABCC7), found in Arabidopsis thaliana (Mouse-ear cress).